A 181-amino-acid polypeptide reads, in one-letter code: Adenine phosphoribosyltransferase (181 aa).

The protein belongs to the purine/pyrimidine phosphoribosyltransferase family. Homodimer.

It is found in the cytoplasm. The catalysed reaction is AMP + diphosphate = 5-phospho-alpha-D-ribose 1-diphosphate + adenine. It functions in the pathway purine metabolism; AMP biosynthesis via salvage pathway; AMP from adenine: step 1/1. Functionally, catalyzes a salvage reaction resulting in the formation of AMP, that is energically less costly than de novo synthesis. The protein is Adenine phosphoribosyltransferase (Aprt) of Drosophila pseudoobscura pseudoobscura (Fruit fly).